A 137-amino-acid polypeptide reads, in one-letter code: Small heat shock protein IbpA (137 aa).

One can recognise a sHSP domain in the interval 28–137 (SQGNGGYPPY…TLKPRRIEIK (110 aa)).

This sequence belongs to the small heat shock protein (HSP20) family. Monomer. Forms homomultimers of about 100-150 subunits at optimal growth temperatures. Conformation changes to monomers at high temperatures or high ionic concentrations.

It is found in the cytoplasm. Its function is as follows. Associates with aggregated proteins, together with IbpB, to stabilize and protect them from irreversible denaturation and extensive proteolysis during heat shock and oxidative stress. Aggregated proteins bound to the IbpAB complex are more efficiently refolded and reactivated by the ATP-dependent chaperone systems ClpB and DnaK/DnaJ/GrpE. Its activity is ATP-independent. The chain is Small heat shock protein IbpA from Serratia proteamaculans (strain 568).